The primary structure comprises 150 residues: Histone H3-like centromeric protein A (150 aa).

The interval 1–56 is disordered; sequence MRPGSTPASRRKSRPPRRVSPPLPTTSTRSPGRPSAPEQRKAPRATPKKRFRPGTR. The segment covering 25–37 has biased composition (low complexity); sequence TTSTRSPGRPSAP. The segment covering 42-53 has biased composition (basic residues); it reads APRATPKKRFRP. Positions 53–150 are H3-like; the sequence is PGTRALMEIR…RIRGVTEGLG (98 aa).

This sequence belongs to the histone H3 family. As to quaternary structure, component of centromeric nucleosomes, where DNA is wrapped around a histone octamer core. The octamer contains two molecules each of H2A, H2B, CENPA and H4 assembled in one CENPA-H4 heterotetramer and two H2A-H2B heterodimers. CENPA modulates the DNA-binding characteristics of nucleosomes so that protruding DNA ends have higher flexibility than in nucleosomes containing conventional histone H3.

It localises to the nucleus. The protein resides in the chromosome. The protein localises to the centromere. Its function is as follows. Histone H3-like nucleosomal protein that is specifically found in centromeric nucleosomes. Replaces conventional H3 in the nucleosome core of centromeric chromatin that serves as an assembly site for the inner kinetochore. The presence of CENPA subtly modifies the nucleosome structure and the way DNA is wrapped around the nucleosome and gives rise to protruding DNA ends that are less well-ordered and rigid compared to nucleosomes containing histone H3. May serve as an epigenetic mark that propagates centromere identity through replication and cell division. Required for recruitment and assembly of kinetochore proteins, and as a consequence required for progress through mitosis, chromosome segregation and cytokinesis. This chain is Histone H3-like centromeric protein A (cenpa), found in Xenopus tropicalis (Western clawed frog).